The chain runs to 378 residues: Dual-specificity RNA methyltransferase RlmN (378 aa).

The active-site Proton acceptor is E95. A Radical SAM core domain is found at 101 to 345 (EETRGTLCVS…TTIRKTRGDD (245 aa)). An intrachain disulfide couples C108 to C350. [4Fe-4S] cluster contacts are provided by C115, C119, and C122. Residues 176–177 (GE), S208, 230–232 (SLH), and N307 each bind S-adenosyl-L-methionine. C350 (S-methylcysteine intermediate) is an active-site residue.

This sequence belongs to the radical SAM superfamily. RlmN family. The cofactor is [4Fe-4S] cluster.

The protein localises to the cytoplasm. The enzyme catalyses adenosine(2503) in 23S rRNA + 2 reduced [2Fe-2S]-[ferredoxin] + 2 S-adenosyl-L-methionine = 2-methyladenosine(2503) in 23S rRNA + 5'-deoxyadenosine + L-methionine + 2 oxidized [2Fe-2S]-[ferredoxin] + S-adenosyl-L-homocysteine. The catalysed reaction is adenosine(37) in tRNA + 2 reduced [2Fe-2S]-[ferredoxin] + 2 S-adenosyl-L-methionine = 2-methyladenosine(37) in tRNA + 5'-deoxyadenosine + L-methionine + 2 oxidized [2Fe-2S]-[ferredoxin] + S-adenosyl-L-homocysteine. In terms of biological role, specifically methylates position 2 of adenine 2503 in 23S rRNA and position 2 of adenine 37 in tRNAs. m2A2503 modification seems to play a crucial role in the proofreading step occurring at the peptidyl transferase center and thus would serve to optimize ribosomal fidelity. The sequence is that of Dual-specificity RNA methyltransferase RlmN from Burkholderia pseudomallei (strain K96243).